A 453-amino-acid chain; its full sequence is Probable glycine dehydrogenase (decarboxylating) subunit 1 (453 aa).

The protein belongs to the GcvP family. N-terminal subunit subfamily. In terms of assembly, the glycine cleavage system is composed of four proteins: P, T, L and H. In this organism, the P 'protein' is a heterodimer of two subunits.

The enzyme catalyses N(6)-[(R)-lipoyl]-L-lysyl-[glycine-cleavage complex H protein] + glycine + H(+) = N(6)-[(R)-S(8)-aminomethyldihydrolipoyl]-L-lysyl-[glycine-cleavage complex H protein] + CO2. Functionally, the glycine cleavage system catalyzes the degradation of glycine. The P protein binds the alpha-amino group of glycine through its pyridoxal phosphate cofactor; CO(2) is released and the remaining methylamine moiety is then transferred to the lipoamide cofactor of the H protein. In Erythrobacter litoralis (strain HTCC2594), this protein is Probable glycine dehydrogenase (decarboxylating) subunit 1.